A 247-amino-acid polypeptide reads, in one-letter code: Diglucosylglycerate octanoyltransferase (247 aa).

This sequence belongs to the OctT acyltransferase family. Homotetramer.

The catalysed reaction is (2R)-2-O-[alpha-D-glucopyranosyl-(1-&gt;6)-alpha-D-glucopyranosyl]-glycerate + octanoyl-CoA = (2R)-2-O-[6-O-octanoyl-alpha-D-glucopyranosyl-(1-&gt;6)-alpha-D-glucopyranosyl]-glycerate + CoA. Functionally, sugar octanoyltransferase likely involved in the biosynthesis of mycobacterial methylglucose lipopolysaccharide (MGLP). Catalyzes the transfer of an octanoyl group from octanoyl-CoA to the C6 OH of the second glucose in diglucosylglycerate (DGG). DGG is the preferred acceptor, but to a lesser extent, GG (glucosylglycerate) can also be used as substrate. DGG and GG are the two earliest intermediates in MGLP biosynthesis. The sequence is that of Diglucosylglycerate octanoyltransferase from Mycobacterium tuberculosis (strain ATCC 25618 / H37Rv).